The primary structure comprises 348 residues: Selenide, water dikinase (348 aa).

Residue Cys-17 is part of the active site. ATP contacts are provided by residues Lys-20 and Thr-47–Asp-49. Asp-50 lines the Mg(2+) pocket. Residues Asp-67, Asp-90, and Gly-138–Thr-140 contribute to the ATP site. Position 90 (Asp-90) interacts with Mg(2+). Asp-226 is a binding site for Mg(2+).

It belongs to the selenophosphate synthase 1 family. Class I subfamily. Homodimer. It depends on Mg(2+) as a cofactor.

It carries out the reaction hydrogenselenide + ATP + H2O = selenophosphate + AMP + phosphate + 2 H(+). Synthesizes selenophosphate from selenide and ATP. The sequence is that of Selenide, water dikinase from Porphyromonas gingivalis (strain ATCC 33277 / DSM 20709 / CIP 103683 / JCM 12257 / NCTC 11834 / 2561).